The following is a 349-amino-acid chain: Protein-glutamate methylesterase/protein-glutamine glutaminase (349 aa).

The Response regulatory domain maps to 2–118 (RVLVVDDSAL…VDLSSVAQEL (117 aa)). 4-aspartylphosphate is present on Asp-52. Positions 159-345 (VLIGSSTGGP…EEIVRFLEVK (187 aa)) constitute a CheB-type methylesterase domain. Active-site residues include Ser-164, His-191, and Asp-287.

Belongs to the CheB family. Phosphorylated by CheA. Phosphorylation of the N-terminal regulatory domain activates the methylesterase activity.

The protein localises to the cytoplasm. The catalysed reaction is [protein]-L-glutamate 5-O-methyl ester + H2O = L-glutamyl-[protein] + methanol + H(+). The enzyme catalyses L-glutaminyl-[protein] + H2O = L-glutamyl-[protein] + NH4(+). In terms of biological role, involved in chemotaxis. Part of a chemotaxis signal transduction system that modulates chemotaxis in response to various stimuli. Catalyzes the demethylation of specific methylglutamate residues introduced into the chemoreceptors (methyl-accepting chemotaxis proteins or MCP) by CheR. Also mediates the irreversible deamidation of specific glutamine residues to glutamic acid. The sequence is that of Protein-glutamate methylesterase/protein-glutamine glutaminase from Archaeoglobus fulgidus (strain ATCC 49558 / DSM 4304 / JCM 9628 / NBRC 100126 / VC-16).